A 393-amino-acid polypeptide reads, in one-letter code: NAD(P)H-quinone oxidoreductase subunit H, chloroplastic (393 aa).

Belongs to the complex I 49 kDa subunit family. As to quaternary structure, NDH is composed of at least 16 different subunits, 5 of which are encoded in the nucleus.

It is found in the plastid. The protein localises to the chloroplast thylakoid membrane. The catalysed reaction is a plastoquinone + NADH + (n+1) H(+)(in) = a plastoquinol + NAD(+) + n H(+)(out). It carries out the reaction a plastoquinone + NADPH + (n+1) H(+)(in) = a plastoquinol + NADP(+) + n H(+)(out). Its function is as follows. NDH shuttles electrons from NAD(P)H:plastoquinone, via FMN and iron-sulfur (Fe-S) centers, to quinones in the photosynthetic chain and possibly in a chloroplast respiratory chain. The immediate electron acceptor for the enzyme in this species is believed to be plastoquinone. Couples the redox reaction to proton translocation, and thus conserves the redox energy in a proton gradient. This chain is NAD(P)H-quinone oxidoreductase subunit H, chloroplastic, found in Psilotum nudum (Whisk fern).